The following is a 273-amino-acid chain: Undecaprenyl-diphosphatase (273 aa).

The next 8 membrane-spanning stretches (helical) occupy residues 4–24, 48–68, 89–109, 116–136, 152–172, 193–213, 222–242, and 252–272; these read MELW…FAPV, AANT…VVVF, LNLI…VLFE, LFST…MIAA, ITYK…WPGF, ADFT…LSLL, ADIP…LLAI, and IRLV…YFLY.

The protein belongs to the UppP family.

It localises to the cell membrane. It carries out the reaction di-trans,octa-cis-undecaprenyl diphosphate + H2O = di-trans,octa-cis-undecaprenyl phosphate + phosphate + H(+). Functionally, catalyzes the dephosphorylation of undecaprenyl diphosphate (UPP). Confers resistance to bacitracin. This Geobacillus kaustophilus (strain HTA426) protein is Undecaprenyl-diphosphatase.